We begin with the raw amino-acid sequence, 353 residues long: Putative transport protein aq_740 (353 aa).

8 helical membrane-spanning segments follow: residues 4–24 (LSLF…LYLL), 28–48 (FNPI…YGFI), 60–80 (FLVI…FAVI), 156–176 (VYTA…LFFI), 209–229 (VLAV…MGFI), 240–260 (LIWA…AAFV), 268–288 (LFTT…TFLI), and 309–329 (VALF…GVFL).

This sequence belongs to the autoinducer-2 exporter (AI-2E) (TC 2.A.86) family.

It is found in the cell membrane. The sequence is that of Putative transport protein aq_740 from Aquifex aeolicus (strain VF5).